The chain runs to 323 residues: Type II restriction enzyme BsoBI (323 aa).

The Mg(2+) site is built by Asp212, Glu240, and Lys242.

As to quaternary structure, homodimer.

It carries out the reaction Endonucleolytic cleavage of DNA to give specific double-stranded fragments with terminal 5'-phosphates.. A P subtype restriction enzyme that recognizes the double-stranded sequence 5'-CYCGRG-3' and cleaves after C-1. The protein is Type II restriction enzyme BsoBI of Geobacillus stearothermophilus (Bacillus stearothermophilus).